The chain runs to 251 residues: tRNA pseudouridine synthase A (251 aa).

D26 functions as the Nucleophile in the catalytic mechanism. Y98 serves as a coordination point for substrate.

Belongs to the tRNA pseudouridine synthase TruA family. As to quaternary structure, homodimer.

The enzyme catalyses uridine(38/39/40) in tRNA = pseudouridine(38/39/40) in tRNA. In terms of biological role, formation of pseudouridine at positions 38, 39 and 40 in the anticodon stem and loop of transfer RNAs. This is tRNA pseudouridine synthase A from Mycolicibacterium paratuberculosis (strain ATCC BAA-968 / K-10) (Mycobacterium paratuberculosis).